The sequence spans 382 residues: Galactokinase (382 aa).

34 to 37 (EHTD) provides a ligand contact to substrate. An ATP-binding site is contributed by 124–130 (GAGLSSS). Mg(2+) is bound by residues serine 130 and glutamate 162. Aspartate 174 serves as the catalytic Proton acceptor. Position 223 (tyrosine 223) interacts with substrate.

It belongs to the GHMP kinase family. GalK subfamily.

The protein resides in the cytoplasm. The catalysed reaction is alpha-D-galactose + ATP = alpha-D-galactose 1-phosphate + ADP + H(+). Its pathway is carbohydrate metabolism; galactose metabolism. Its function is as follows. Catalyzes the transfer of the gamma-phosphate of ATP to D-galactose to form alpha-D-galactose-1-phosphate (Gal-1-P). In Salmonella paratyphi A (strain ATCC 9150 / SARB42), this protein is Galactokinase.